A 131-amino-acid polypeptide reads, in one-letter code: DPGCLPDWSSYKGHCYKVFKKVGTWEDAEKFCVENSGHLASIDSKEEADFVTKLASQTLTKFVYDAWIGLRDESKTQQCSPQWTDGSSVVYENVDEPTKCFGLDVHTEYRTWTDLPCGEKNPFICKSRLPH.

3 cysteine pairs are disulfide-bonded: cysteine 4/cysteine 15, cysteine 32/cysteine 125, and cysteine 100/cysteine 117. A C-type lectin domain is found at 11–126 (YKGHCYKVFK…CGEKNPFICK (116 aa)).

This sequence belongs to the snaclec family. In terms of assembly, heterodimer of subunits alpha and beta; disulfide-linked. Expressed by the venom gland.

The protein localises to the secreted. In terms of biological role, snaclec that binds to von Willebrand factor (VWF) and induces its interaction with GPIbalpha (GP1BA) (via the vWF A1 domain), resulting in platelet aggregation. This Bitis arietans (African puff adder) protein is Snaclec bitiscetin subunit alpha.